The following is a 175-amino-acid chain: FMN reductase (NADH) RutF (175 aa).

This sequence belongs to the non-flavoprotein flavin reductase family. RutF subfamily.

The catalysed reaction is FMNH2 + NAD(+) = FMN + NADH + 2 H(+). Its function is as follows. Catalyzes the reduction of FMN to FMNH2 which is used to reduce pyrimidine by RutA via the Rut pathway. The sequence is that of FMN reductase (NADH) RutF from Serratia proteamaculans (strain 568).